The following is a 211-amino-acid chain: Thiamine-phosphate synthase (211 aa).

Residues 37–41 (QLREK) and Asn-69 contribute to the 4-amino-2-methyl-5-(diphosphooxymethyl)pyrimidine site. Mg(2+) is bound by residues Asp-70 and Glu-89. Ser-108 contributes to the 4-amino-2-methyl-5-(diphosphooxymethyl)pyrimidine binding site. 134–136 (TTT) is a 2-[(2R,5Z)-2-carboxy-4-methylthiazol-5(2H)-ylidene]ethyl phosphate binding site. 4-amino-2-methyl-5-(diphosphooxymethyl)pyrimidine is bound at residue Lys-137. 2-[(2R,5Z)-2-carboxy-4-methylthiazol-5(2H)-ylidene]ethyl phosphate is bound by residues Gly-163 and 183–184 (VS).

The protein belongs to the thiamine-phosphate synthase family. Mg(2+) is required as a cofactor.

It carries out the reaction 2-[(2R,5Z)-2-carboxy-4-methylthiazol-5(2H)-ylidene]ethyl phosphate + 4-amino-2-methyl-5-(diphosphooxymethyl)pyrimidine + 2 H(+) = thiamine phosphate + CO2 + diphosphate. The catalysed reaction is 2-(2-carboxy-4-methylthiazol-5-yl)ethyl phosphate + 4-amino-2-methyl-5-(diphosphooxymethyl)pyrimidine + 2 H(+) = thiamine phosphate + CO2 + diphosphate. It catalyses the reaction 4-methyl-5-(2-phosphooxyethyl)-thiazole + 4-amino-2-methyl-5-(diphosphooxymethyl)pyrimidine + H(+) = thiamine phosphate + diphosphate. It functions in the pathway cofactor biosynthesis; thiamine diphosphate biosynthesis; thiamine phosphate from 4-amino-2-methyl-5-diphosphomethylpyrimidine and 4-methyl-5-(2-phosphoethyl)-thiazole: step 1/1. Its function is as follows. Condenses 4-methyl-5-(beta-hydroxyethyl)thiazole monophosphate (THZ-P) and 2-methyl-4-amino-5-hydroxymethyl pyrimidine pyrophosphate (HMP-PP) to form thiamine monophosphate (TMP). The protein is Thiamine-phosphate synthase of Enterococcus faecalis (strain ATCC 700802 / V583).